We begin with the raw amino-acid sequence, 3779 residues long: METLSVLLRTFKRDNQSSIYKKNRQIKSQNKLQNKSQNNGNNNNNKDNNNINKDGSNYYQIFKDNRDSNNFDCKLSIDLNYIAFSISDNKKLIITSLYYNKNNIASTNSSPSSSLSSSSSSVFLFNSVLNNNNNNNNNNSNNNSYTYKQPYYYYHQQQQQHQYQQQQQQQHHFGSHHHHFFSHNSSFYKEYIDKDIQILRFYQQQQTSEDYKIEIEGISEVFQYSWMSPKVQKEPISLYNNSNNDNTTIPSNLVVLDNNQSSLHLLSIFKNLTTINPQDSQQSLQNSSSSIKISDIKLNKTLCIISPIVQQPQQQPQQQQQQQQQQQQQQQQQQQQQQQQQQPNQITIKTFKNYLLHHFILPYQKILEQLDLPQNTTSCIEILSSDDQGNLVLLVEKSVIALFKIKQIDSLNFIFFIQRRFNLSIGNSKKEYYQNITTIINNDNNNNKSSEEDKPIHLVKYIDKWLFIVNRLDGETSIWNINGKKRGIFQLKSLLNKDKIITSKFSEINEISISSDLMSIVYKCQNDQLYVLSLDYCFQNTITQQLSTIGLINYCHTNKIDDECDIFSPSSFISPIISGADQQEQQQQQQQLPTLIDPIDSEDSDDEELYSNAEDITNKNEIFQFHWFETTESSLKLQDNKKEFGQLAQWIPKKNSNSYALNGFTVYNNNNNLNALYNPNGNNSGNNSGRMSRENSFVFNNNKVLGKSQSIADDLYKEMNNNNEQLSSSSSPSILVKSNSNNNFQQVQQQLNDSLYSLIIPSLEDLDNDNKVLINTELFITPKLIVYQKDYRVTISSGINNNGDDEYDDDDDNDDNSQFKTEFYLYDRNKIDRRSIEIIQGRVLTVKLLDQSFYHLTENGINSILVDTNQQQILNNLIMLEGAESANHLCSLNQWNKRDLKVHALHLGLKYRQLDVVEPALASLDMDQQFIGSRLLINIILENSANAANSNVHNESFTNELLHIGMNFIGIIIKDRAQLVHQSLKKHNQNQTKMDLYNKDHEDEEEEGDGDNSNNSNSQDSDGDDDDDLKKILQKVNDIPIPEASITTTTTTTTENNHIEQQVKQIGNINWTETLTTPLNSSTFLDNHQQQSSASASLNQLLSIDDQKQQQPNTPIQDLLLFTKILEALRLFQKEKQDSTLPKRKQHGYYHQQQQQQQYHQQQQQQQQQTYNQLLITQMNDMGSWFPPGLIDRWERMEELEIIKESLNNGNISTLISYINWKREKKGLLYHQQQSSSSSQDSLSSHNDLTFPHLKFISGSGPFTFNDIQKISCCFVYQAISQDQLEVAIKLLKTIGTPIVPNLKQLAFHTSRRNIRNQILDLLLNHPMFKNNNDDDDDDGENNKFFTAQVLELIDFRSKLDKLYPNFSYHREFSRLSFKWRPLLESKPPLLIQQQQQLQQYYQLQNKQQQYQYPIKLFSFDLYSDDDIKIQSQEVDDLLPNTEHHYGFQLITHGNASLQQTNVYSSGFLRTSSPMVANNNNGGINNNGGDIGSGTGNSTPTGYRNRIILYPPPTNSIYNNNNNNNNNNNNTNSSSLLSNSINGNQLQHIPQTMDGYSHYTLNWLSKWSTDTKERILIDKKYKMEKRNIISKLFHSINHNQHQSVLDWVNQLSLKEIQSLRDLVLKRFIIVKNNHKTTTTTTKKIIVKRIKNSSKKETTVLEKETKETKDNNLENNNNNTNNSNNNNNNKEDIEDNKQEILLYNSIIESLKTSTQFVRDMFLNHLAKNRIFLLDVESSPWFYIENQYKSFSVDKNYLLMKRLAYNHLLFPEFNDDSISSSDGIKSLFKSHSYPLNKLLPIFTSTNHDENNGNNSNVENGGSGEDLRQQLDFHKFFIEFCIKNRLYLLLSSYLSSYRLANNWSERKLLDIELESNQFVSNDIQAQLLLLFKSRSKVDFIKSNILNLVSLLSDNINTNNNNNNSGNSDEKLKLQNQQKMKQQLQINLSSFDNSFNIQNQLDQFYNIINNVIEKYPNKPLIALASMIYSPINFKDLMSGITDQGIKLQSKQLLSKIKKQYPTTFKILEKLSNSSNNNNNNNDGSTTSTTTLNRSDSNNNLRQLIKPRDIITSKQDITLSELLESNSLFSLSHLFGSTDQDSQRLLIGDFRLQSFKEGYLDRIDVFYYLEKGRPLKAFNHLCKSLSKINNNNNNNNNNNNNNNNNNNNNNNNNNNNNNNNNNNNNNNSSIDIIDGDNGYEIKFSNKEQRNLIGWLIRTFTLKRINRKESVSSAIALMDLCKMYEYSTLIRTDVSVLQCILSNQSNITPHQYSPLLLSSSFNGENISTTANNNNNNNNNNNNNNNNNNNNNNNNNNNNNNNNNNNNNNEQQDTLNSYQIESIELFLSLYKTPESLLEIMTLSLGGKTSTSSSNTASVPYPGSPIQRIISRFENTISIDEPLVAVKTDDENNNNNNNNDNSSSSTPILKNNWYLLSKFCQCHHVAKLTRQLEHLASSGNWLEFIYQAQIQDFPLQQIKEIIYEKVNSIGIKSHLLLVLEQLSNDRKRQYINHHHQINNNNNNNEKEEEEEREEGINNSELLINSMNYYPIEESKLSNDIIGYLLSSYRSNNPRNYLLYNATKDKRPLLAVIANCIDRNQNDLSTIECLVTWLCVCTTNLSKFLSGNDNVTIDDSFDFDLDALNISLDHHVVPNIKKYNYQDLINSVQYIIQNRKSFILLQGFKIFLPNNILLNYLKFINQFHQYRFEDSEESLRLFINDLFDFKGGDGNNNNNNNNNQNNNNQNNNNNQNNNDSSIYFKSKDSVKKMVVEICENLLEMFSSYEREHFIGILHRSGISYTFSTLYSTLNLLKRTQMQDKSIHMDPKLIVQHLIEKGLFKDARTYSLENHLDKDLVTVAEVDALINHYQQGCLWEIEQERINLWKKCQQYFIQHQSKPDIAGELFYNRGNNIQPSREKVFLLSIAVEWFEKSYFENINTDNIVGSGSGNTTQLTPTKSSSITTTFIEDLKKQILLLSVGLSNQESNDRPFDDDGSYEDFSPSTSPARSITFPRGTNRGSGGFKSVNNNNNNNSNSDSIKNSSQNLLSYFTSPMASPSSSLSSSPIDHHDSPIKDYAQRNRKFQLISSSGTNSSFSTSPLQQPSFVSSIKDNKTTTTTTTTSVSSVISPIKSIQLEPKALDNVLSKLLNSNQLFEAEQIVQQFNYKSIDYDLISTMLKIVNRTISPNPNQFPQELINELSRDYNTSRWLKASQQSQFQSSSTFTGASGNGNGGNSGFEISVENILSTLENLSSCCTLAKQAAKAIINKFNVSEKLSMGYSELLISNPYDIINQLLLLGKDCFRLIKSYIFTNHLDIDKINDQLADLFSETIINQYNKSHQSTSSSGSTSPNMSILSLSLDDQPGRVGEGKSNGIDPNWTSEEFHEYIRIGRDPFTFGMKLIEATRINYESYFSVDNSPGIFGNTGMGSYVSPSLKQQSNTLNGTGGGGGNGGGNNGSGKLSSPIGMEAEVEMFVRAHFCFVIACSVDGTILVLNMVKSRVNYYADAGKYKLLVRLITGMQCYNELQSIFDILLQHNQFELLLRKKIHQHEDQNGLKLALHSYLMKKQPLYQDKLEMLFLRFNMYREIALNNEQKARSRLESLGKMVDNHYGGSGIGGNKSNSSLNSNSSKQELLSIMKDFLDAADNYSKERSQRTAQTCISMGALIALQIKSPEIPIINLRQNQAKHSMTIRPFFKESLIIANAYNLNAYSEWIDVLFYQVLANGNFNYLNDYISYFSHSNLFYSDLIKRYKADTTKSGKLQHVRNIIQNVIVDKNLKNELEKELTNYK.

Disordered regions lie at residues 24 to 56 (RQIKSQNKLQNKSQNNGNNNNNKDNNNINKDGS), 1001 to 1028 (HEDEEEEGDGDNSNNSNSQDSDGDDDDD), 1137 to 1165 (QDSTLPKRKQHGYYHQQQQQQQYHQQQQQ), 1513 to 1538 (PTNSIYNNNNNNNNNNNNTNSSSLLS), 1656 to 1690 (ETTVLEKETKETKDNNLENNNNNTNNSNNNNNNKE), 2027 to 2054 (SNSSNNNNNNNDGSTTSTTTLNRSDSNN), 2144 to 2184 (NNNN…NNSS), 2280 to 2325 (ISTT…NEQQ), 2508 to 2527 (QINNNNNNNEKEEEEEREEG), 2720 to 2748 (DGNNNNNNNNNQNNNNQNNNNNQNNNDSS), 2975 to 3030 (ESND…DSIK), and 3427 to 3450 (QSNTLNGTGGGGGNGGGNNGSGKL). Low complexity-rich tracts occupy residues 26 to 56 (IKSQNKLQNKSQNNGNNNNNKDNNNINKDGS), 1011 to 1020 (DNSNNSNSQD), 1149 to 1165 (YYHQQQQQQQYHQQQQQ), and 1515 to 1538 (NSIYNNNNNNNNNNNNTNSSSLLS). The segment covering 1656–1671 (ETTVLEKETKETKDNN) has biased composition (basic and acidic residues). The span at 1672-1687 (LENNNNNTNNSNNNNN) shows a compositional bias: low complexity. Low complexity-rich tracts occupy residues 2144–2182 (NNNNNNNNNNNNNNNNNNNNNNNNNNNNNNNNNNNNNNN) and 2285–2322 (NNNNNNNNNNNNNNNNNNNNNNNNNNNNNNNNNNNNNN). 2 stretches are compositionally biased toward low complexity: residues 2722–2745 (NNNNNNNNNQNNNNQNNNNNQNNN) and 3015–3030 (SVNNNNNNNSNSDSIK). Gly residues predominate over residues 3433 to 3446 (GTGGGGGNGGGNNG).

In Dictyostelium discoideum (Social amoeba), this protein is Protein DDB_G0268328.